We begin with the raw amino-acid sequence, 544 residues long: Chaperonin GroEL (544 aa).

ATP is bound by residues 29–32 (TLGP), lysine 50, 86–90 (DGTTT), glycine 414, and aspartate 494.

This sequence belongs to the chaperonin (HSP60) family. As to quaternary structure, forms a cylinder of 14 subunits composed of two heptameric rings stacked back-to-back. Interacts with the co-chaperonin GroES.

The protein resides in the cytoplasm. The catalysed reaction is ATP + H2O + a folded polypeptide = ADP + phosphate + an unfolded polypeptide.. Functionally, together with its co-chaperonin GroES, plays an essential role in assisting protein folding. The GroEL-GroES system forms a nano-cage that allows encapsulation of the non-native substrate proteins and provides a physical environment optimized to promote and accelerate protein folding. This is Chaperonin GroEL from Amoebophilus asiaticus (strain 5a2).